A 198-amino-acid polypeptide reads, in one-letter code: Imidazole glycerol phosphate synthase subunit HisH (198 aa).

In terms of domain architecture, Glutamine amidotransferase type-1 spans 1–194 (MIAIIDYGLG…LKGGFQDDQT (194 aa)). The active-site Nucleophile is Cys77. Active-site residues include His169 and Glu171.

Heterodimer of HisH and HisF.

It localises to the cytoplasm. It carries out the reaction 5-[(5-phospho-1-deoxy-D-ribulos-1-ylimino)methylamino]-1-(5-phospho-beta-D-ribosyl)imidazole-4-carboxamide + L-glutamine = D-erythro-1-(imidazol-4-yl)glycerol 3-phosphate + 5-amino-1-(5-phospho-beta-D-ribosyl)imidazole-4-carboxamide + L-glutamate + H(+). It catalyses the reaction L-glutamine + H2O = L-glutamate + NH4(+). It participates in amino-acid biosynthesis; L-histidine biosynthesis; L-histidine from 5-phospho-alpha-D-ribose 1-diphosphate: step 5/9. Its function is as follows. IGPS catalyzes the conversion of PRFAR and glutamine to IGP, AICAR and glutamate. The HisH subunit catalyzes the hydrolysis of glutamine to glutamate and ammonia as part of the synthesis of IGP and AICAR. The resulting ammonia molecule is channeled to the active site of HisF. The chain is Imidazole glycerol phosphate synthase subunit HisH from Staphylococcus saprophyticus subsp. saprophyticus (strain ATCC 15305 / DSM 20229 / NCIMB 8711 / NCTC 7292 / S-41).